We begin with the raw amino-acid sequence, 332 residues long: FAD-dependent monooxygenase elcE (332 aa).

This sequence belongs to the oxygen-dependent FAD-linked oxidoreductase family.

It participates in secondary metabolite biosynthesis. Its function is as follows. FAD-dependent monooxygenase; part of the gene cluster that mediates the biosynthesis of elsinochrome C, a perelyenequinone phytotoxin structurally similar to cercosporin. The first step of elsinochrome C biosynthesis is performed by the polyketide synthase elcA which catalyzes the formation of nor-toralactone. The starter unit acyltransferase (SAT) domain of elcA initiates polyketide extension by the selective utilization of acetyl-CoA, which is elongated to the heptaketide in the beta-ketoacyl synthase (KS) domain by successive condensations with six malonyl units introduced by the malonyl acyltransferase (MAT) domain. The product template (PT) domain catalyzes C4-C9 and C2-C11 aldol cyclizations and dehydrations to a trihydroxynaphthalene, which is thought to be delivered to the thioesterase (TE) domain for product release. The bifunctional enzyme elcB then methylates nor-toralactone to toralactone before conducting an unusual oxidative aromatic ring opening. The next step in perylenequinone biosynthesis is an O-methylation at the nascent OH-6 of the elcB product performed by the O-methyltransferase elcD. The oxidative coupling of the two monomeric naphthol units in perylenequinone biosynthesis is catalyzed by the FAD-dependent monooxygenase elcE and the multicopper oxidase elcG. ElcG might catalyze the first intermolecular coupling in a regio- and stereo-selective manner via a phenol radical coupling mechanism and the elcE could forge the second C-C bond intramolecularly via a hydride transfer mechanism. The fasciclin domain-containing protein elcF might also play a role duting this step. The last piece of the puzzle in the biosynthesis of elsinochrome C is the additional annulation by enolate coupling to afford the dihydrobenzo(ghi)perylenequinone system, catalyzed by the FAD-dependent monooxygenase elcH. The sequence is that of FAD-dependent monooxygenase elcE from Phaeosphaeria nodorum (strain SN15 / ATCC MYA-4574 / FGSC 10173) (Glume blotch fungus).